Here is a 299-residue protein sequence, read N- to C-terminus: Putative adenosine/adenine deaminase (299 aa).

Residues His16 and His18 each coordinate Zn(2+). Residues His18 and Gly157 each contribute to the substrate site. His184 is a binding site for Zn(2+). The active-site Proton donor is the Glu187. Position 265 (Asp265) interacts with Zn(2+). Asp266 is a binding site for substrate.

Belongs to the metallo-dependent hydrolases superfamily. Adenosine and AMP deaminases family. It depends on Zn(2+) as a cofactor.

Putative nucleoside deaminase. May catalyze the hydrolytic deamination of adenosine or some similar substrate and play a role in purine metabolism. The sequence is that of Putative adenosine/adenine deaminase from Treponema pallidum (strain Nichols).